The following is a 1488-amino-acid chain: Chromosome partition protein MukB (1488 aa).

An ATP-binding site is contributed by 34 to 41 (GGNGAGKS). 3 coiled-coil regions span residues 326-418 (LEAD…QYNQ), 444-472 (LDTF…QTAH), and 509-602 (RHLA…QRAP). Residues 666–783 (PGGAEDQRLN…SLPIFGRAAR (118 aa)) form a flexible hinge region. Coiled coils occupy residues 835–923 (EAEI…AKLE), 977–1116 (EMLS…AKAG), and 1209–1265 (VEAI…LQSV). The interval 1049–1074 (ADSGAEERARQRRDELHAQLSNNRSR) is disordered. A compositionally biased stretch (basic and acidic residues) spans 1051 to 1065 (SGAEERARQRRDELH).

Belongs to the SMC family. MukB subfamily. Homodimerization via its hinge domain. Binds to DNA via its C-terminal region. Interacts, and probably forms a ternary complex, with MukE and MukF via its C-terminal region. The complex formation is stimulated by calcium or magnesium. Interacts with tubulin-related protein FtsZ.

It localises to the cytoplasm. The protein localises to the nucleoid. Plays a central role in chromosome condensation, segregation and cell cycle progression. Functions as a homodimer, which is essential for chromosome partition. Involved in negative DNA supercoiling in vivo, and by this means organize and compact chromosomes. May achieve or facilitate chromosome segregation by condensation DNA from both sides of a centrally located replisome during cell division. The sequence is that of Chromosome partition protein MukB from Salmonella arizonae (strain ATCC BAA-731 / CDC346-86 / RSK2980).